Reading from the N-terminus, the 3392-residue chain is Genome polyprotein (3392 aa).

Residues 1-101 (MNNQRKKTGR…LNIMNRRKRS (101 aa)) are Cytoplasmic-facing. The hydrophobic; homodimerization of capsid protein C stretch occupies residues 33–74 (FSKGLLSGQGPMKLVMAFIAFLRFLAIPPTAGILARWSSFKK). The propeptide at 101-114 (SVTMLLMLLPTALA) is ER anchor for the protein C, removed in mature form by serine protease NS3. The chain crosses the membrane as a helical span at residues 102 to 119 (VTMLLMLLPTALAFHLTT). Topologically, residues 120-242 (RGGEPHMIVS…QIQKVETWAL (123 aa)) are extracellular. The N-linked (GlcNAc...) asparagine; by host glycan is linked to asparagine 183. A helical transmembrane segment spans residues 243–260 (RHPGFTVIALFLAHAIGT). Position 261 (serine 261) is a topological domain, cytoplasmic. The chain crosses the membrane as a helical span at residues 262–280 (ITQKGIIFILLMLVTPSMA). Residues 281 to 725 (MRCVGIGNRD…VHQVFGTAYG (445 aa)) are Extracellular-facing. 4 cysteine pairs are disulfide-bonded: cysteine 283/cysteine 310, cysteine 340/cysteine 401, cysteine 354/cysteine 385, and cysteine 372/cysteine 396. Residue asparagine 347 is glycosylated (N-linked (GlcNAc...) asparagine; by host). Residue asparagine 433 is glycosylated (N-linked (GlcNAc...) asparagine; by host). 2 disulfides stabilise this stretch: cysteine 465/cysteine 565 and cysteine 582/cysteine 613. The helical intramembrane region spans 726 to 746 (VLFSGVSWTMKIGIGILLTWL). Topologically, residues 747–752 (GLNSRS) are extracellular. An intramembrane region (helical) is located at residues 753–775 (TSLSMTCIAVGMVTLYLGVMVQA). Residues 776-1125 (DSGCVINWKG…KEENLVRSMV (350 aa)) are Extracellular-facing. 6 cysteine pairs are disulfide-bonded: cysteine 779/cysteine 790, cysteine 830/cysteine 918, cysteine 954/cysteine 998, cysteine 1055/cysteine 1104, cysteine 1066/cysteine 1088, and cysteine 1087/cysteine 1091. 2 N-linked (GlcNAc...) asparagine; by host glycosylation sites follow: asparagine 905 and asparagine 982. Residues 1126-1146 (SAGSGEVDSFSLGILCVSIMI) form a helical membrane-spanning segment. At 1147–1157 (EEVMRSRWSRK) the chain is on the cytoplasmic side. Residues 1158–1178 (MLMTGTLAVFLLLIMGQLTWN) traverse the membrane as a helical segment. At 1179-1199 (DLIRLCIMVGANASDKMGMGT) the chain is on the lumenal side. An N-linked (GlcNAc...) asparagine; by host glycan is attached at asparagine 1190. A helical transmembrane segment spans residues 1200–1220 (TYLALMATFKMRPMFAVGLLF). The Cytoplasmic segment spans residues 1221–1289 (RRLTSREVLL…TFIKTTLSLD (69 aa)). A helical membrane pass occupies residues 1290–1310 (YAWKTTAMVLSIVSLFPLCLS). Residues 1311–1315 (TTSQK) lie on the Lumenal side of the membrane. Residues 1316 to 1336 (TTWLPVLLGSFGCKPLTMFLI) form a helical membrane-spanning segment. Over 1337–1346 (TENEIWGRKS) the chain is Cytoplasmic. The chain crosses the membrane as a helical span at residues 1347–1367 (WPLNEGIMAIGIVSILLSSLL). The Lumenal portion of the chain corresponds to 1368-1370 (KND). Residues 1371–1391 (VPLAGPLIAGGMLIACYVISG) traverse the membrane as a helical segment. The Cytoplasmic segment spans residues 1392–1447 (SSADLSLEKAAEVSWEEEAEHSGTSHNILVEVQDDGTMKIKDEERDDTLTILLKAT). The tract at residues 1398–1437 (LEKAAEVSWEEEAEHSGTSHNILVEVQDDGTMKIKDEERD) is interacts with and activates NS3 protease. Residues 1448–1468 (LLAVSGVYPMSIPATLFVWYF) constitute an intramembrane region (helical). The Cytoplasmic segment spans residues 1469-2148 (WQKKKQRSGV…MEELPDTIET (680 aa)). Residues 1476 to 1653 (SGVLWDTPSP…KASQEGPLPE (178 aa)) form the Peptidase S7 domain. Active-site charge relay system; for serine protease NS3 activity residues include histidine 1526, aspartate 1550, and serine 1610. The region spanning 1656–1812 (DEVFKKRNLT…QSNAVIQDEE (157 aa)) is the Helicase ATP-binding domain. Residue 1669–1676 (LHPGSGKT) coordinates ATP. The DEAH box signature appears at 1760 to 1763 (DEAH). One can recognise a Helicase C-terminal domain in the interval 1822 to 1989 (SGYDWITDFP…IIPALFEPER (168 aa)). The residue at position 1864 (lysine 1864) is an N6-acetyllysine; by host. A helical transmembrane segment spans residues 2149–2169 (LMLLALIAVLTGGVTLFFLSG). At 2170 to 2171 (KG) the chain is on the lumenal side. An intramembrane region (helical) is located at residues 2172–2192 (LGKTSIGLLCVTASSALLWMA). Position 2193 (serine 2193) is a topological domain, lumenal. Residues 2194 to 2214 (VEPHWIAASIILEFFLMVLLI) traverse the membrane as a helical segment. Topologically, residues 2215–2229 (PEPDRQRTPQDNQLA) are cytoplasmic. Residues 2230-2250 (YVVIGLLFMILTVAANEMGLL) form a helical membrane-spanning segment. The Lumenal segment spans residues 2251 to 2276 (ETTKKDLGIGHVAAENHQHATILDVD). The segment at residues 2277–2297 (LHPASAWTLYAVATTVITPMM) is an intramembrane region (helical). Over 2298 to 2349 (RHTIENTTANISLTAIANQAAILMGLDKGWPISKMDLGVPLLALGCYSQVNP) the chain is Lumenal. 2 N-linked (GlcNAc...) asparagine; by host glycosylation sites follow: asparagine 2303 and asparagine 2307. A helical transmembrane segment spans residues 2350 to 2370 (LTLTAAVLMLVAHYAIIGPGL). At 2371 to 2415 (QAKATREAQKRTAAGIMKNPTVDGIVAIDLDPVVYDAKFEKQLGQ) the chain is on the cytoplasmic side. Residues 2416-2436 (IMLLILCTSQILLMRTTWALC) traverse the membrane as a helical segment. Over 2437 to 2461 (ESITLATGPLTTLWEGSPGKFWNTT) the chain is Lumenal. An N-linked (GlcNAc...) asparagine; by host glycan is attached at asparagine 2459. The chain crosses the membrane as a helical span at residues 2462–2482 (IAVSMANIFRGSYLAGAGLAF). Residues 2483–3392 (SLMKSLGGGR…NESDPEGALW (910 aa)) are Cytoplasmic-facing. Residues 2495–2756 (TGAQGETLGE…DVDLGAGTRH (262 aa)) form the mRNA cap 0-1 NS5-type MT domain. Residues serine 2549, glycine 2579, tryptophan 2580, threonine 2597, lysine 2598, aspartate 2624, valine 2625, isoleucine 2640, and tyrosine 2711 each coordinate S-adenosyl-L-methionine. Residues 3021-3170 (NMYADDTAGW…PIDDRFATAL (150 aa)) enclose the RdRp catalytic domain.

In the N-terminal section; belongs to the class I-like SAM-binding methyltransferase superfamily. mRNA cap 0-1 NS5-type methyltransferase family. As to quaternary structure, capsid protein C: Homodimer. Interacts (via N-terminus) with host EXOC1 (via C-terminus); this interaction results in EXOC1 degradation through the proteasome degradation pathway. In terms of assembly, forms heterodimers with envelope protein E in the endoplasmic reticulum and Golgi. Homodimer; in the endoplasmic reticulum and Golgi. Interacts with protein prM. Interacts with non-structural protein 1. As to quaternary structure, homodimer; Homohexamer when secreted. Interacts with envelope protein E. In terms of assembly, interacts (via N-terminus) with serine protease NS3. Forms a heterodimer with serine protease NS3. May form homooligomers. As to quaternary structure, forms a heterodimer with NS2B. Interacts with NS4B. Interacts with unphosphorylated RNA-directed RNA polymerase NS5; this interaction stimulates RNA-directed RNA polymerase NS5 guanylyltransferase activity. Interacts with host SHFL. In terms of assembly, interacts with host MAVS; this interaction inhibits the synthesis of IFN-beta. Interacts with host SHFL. Interacts with host AUP1; the interaction occurs in the presence of Dengue virus NS4B and induces lipophagy which facilitates production of virus progeny particles. Interacts with serine protease NS3. As to quaternary structure, homodimer. Interacts with host STAT2; this interaction inhibits the phosphorylation of the latter, and, when all viral proteins are present (polyprotein), targets STAT2 for degradation. Interacts with serine protease NS3. In terms of processing, specific enzymatic cleavages in vivo yield mature proteins. Cleavages in the lumen of endoplasmic reticulum are performed by host signal peptidase, wereas cleavages in the cytoplasmic side are performed by the Serine protease NS3. Signal cleavage at the 2K-4B site requires a prior NS3 protease-mediated cleavage at the 4A-2K site. Post-translationally, a C-terminally truncated form of non-structural protein 2A, results from partial cleavage by NS3. Cleaved in post-Golgi vesicles by a host furin, releasing the mature small envelope protein M, and peptide pr. This cleavage is incomplete as up to 30% of viral particles still carry uncleaved prM. In terms of processing, the excreted form is glycosylated and this is required for efficient secretion of the protein from infected cells. Post-translationally, phosphorylated on serines residues. This phosphorylation may trigger NS5 nuclear localization. N-glycosylated. In terms of processing, acetylated by host KAT5. Acetylation modulates NS3 RNA-binding and unwinding activities and plays an important positive role for viral replication.

Its subcellular location is the virion. The protein resides in the host nucleus. It is found in the secreted. The protein localises to the virion membrane. It localises to the host endoplasmic reticulum membrane. Its subcellular location is the host mitochondrion. It catalyses the reaction Selective hydrolysis of -Xaa-Xaa-|-Yaa- bonds in which each of the Xaa can be either Arg or Lys and Yaa can be either Ser or Ala.. It carries out the reaction RNA(n) + a ribonucleoside 5'-triphosphate = RNA(n+1) + diphosphate. The enzyme catalyses a ribonucleoside 5'-triphosphate + H2O = a ribonucleoside 5'-diphosphate + phosphate + H(+). The catalysed reaction is ATP + H2O = ADP + phosphate + H(+). It catalyses the reaction a 5'-end (5'-triphosphoguanosine)-ribonucleoside in mRNA + S-adenosyl-L-methionine = a 5'-end (N(7)-methyl 5'-triphosphoguanosine)-ribonucleoside in mRNA + S-adenosyl-L-homocysteine. It carries out the reaction a 5'-end (N(7)-methyl 5'-triphosphoguanosine)-ribonucleoside in mRNA + S-adenosyl-L-methionine = a 5'-end (N(7)-methyl 5'-triphosphoguanosine)-(2'-O-methyl-ribonucleoside) in mRNA + S-adenosyl-L-homocysteine + H(+). Plays a role in virus budding by binding to membrane and gathering the viral RNA into a nucleocapsid that forms the core of a mature virus particle. During virus entry, may induce genome penetration in host cytoplasm after hemifusion induced by surface proteins. Can migrate tot cell nucleus where it modulates host functions. In terms of biological role, prevents premature fusion activity of envelope proteins in trans Golgi by binding to envelope protein E at pH6.0. After virion release in extracellular space gets dissociated from E dimers. Its function is as follows. Acts as a chaperone for envelope protein E during intracellular virion assembly by masking and inactivating envelope protein E fusion peptide. prM is the only viral peptide matured by host furin in the trans-Golgi network. Presumably to avoid catastrophic activation of the viral fusion activity in acidic GolGi compartment prior to virion release. prM-E cleavage is ineficient, and many virions are only partially matured. These uncleaved prM would play a role in immune evasion. Functionally, may play a role in virus budding. Exerts cytotoxic effects by activating a mitochondrial apoptotic pathway through M extodomain. May display a viroporin activity. Binds to host cell surface receptor and mediates fusion between viral and cellular membranes. Envelope protein is synthesized in the endoplasmic reticulum in the form of heterodimer with protein prM. They play a role in virion budding in the ER, and the newly formed immature particle is covered with 60 spikes composed of heterodimer between precursor prM and envelope protein E. The virion is transported to the Golgi apparatus where the low pH causes dissociation of PrM-E heterodimers and formation of E homodimers. prM-E cleavage is ineficient, and many virions are only partially matured. These uncleaved prM would play a role in immune evasion. In terms of biological role, involved in immune evasion, pathogenesis and viral replication. Once cleaved off the polyprotein, is targeted to three destinations: the viral replication cycle, the plasma membrane and the extracellular compartment. May play a role in viral genome replication. Assist membrane bending and envelopment of genomic RNA at the endoplasmic reticulum. Excreted as a hexameric lipoparticle that plays a role against host immune response. Its function is as follows. Component of the viral RNA replication complex that functions in virion assembly and antagonizes the host immune response. Functionally, required cofactor for the serine protease function of NS3. May have membrane-destabilizing activity and form viroporins. Displays three enzymatic activities: serine protease, NTPase and RNA helicase. NS3 serine protease, in association with NS2B, performs its autocleavage and cleaves the polyprotein at dibasic sites in the cytoplasm: C-prM, NS2A-NS2B, NS2B-NS3, NS3-NS4A, NS4A-2K and NS4B-NS5. NS3 RNA helicase binds RNA and unwinds dsRNA in the 3' to 5' direction. In terms of biological role, regulates the ATPase activity of the NS3 helicase activity. NS4A allows NS3 helicase to conserve energy during unwinding. Plays a role in the inhibition of the host innate immune response. Interacts with host MAVS and thereby prevents the interaction between RIGI and MAVS. In turn, IFN-beta production is impaired. Interacts with host AUP1 which mediates induction of lipophagy in host cells and facilitates production of virus progeny particles. Its function is as follows. Functions as a signal peptide for NS4B and is required for the interferon antagonism activity of the latter. Functionally, inhibits interferon (IFN)-induced host STAT1 phosphorylation and nuclear translocation, thereby preventing the establishment of cellular antiviral state by blocking the IFN-alpha/beta pathway. Replicates the viral (+) and (-) genome, and performs the capping of genomes in the cytoplasm. NS5 methylates viral RNA cap at guanine N-7 and ribose 2'-O positions. Besides its role in RNA genome replication, also prevents the establishment of cellular antiviral state by blocking the interferon-alpha/beta (IFN-alpha/beta) signaling pathway. Inhibits host TYK2 and STAT2 phosphorylation, thereby preventing activation of JAK-STAT signaling pathway. This Dengue virus type 1 (strain Brazil/97-11/1997) (DENV-1) protein is Genome polyprotein.